Reading from the N-terminus, the 1210-residue chain is V-type proton ATPase 116 kDa subunit a 4 (1210 aa).

At 1–715 (MSSFSNVGFV…YTIITFPFLF (715 aa)) the chain is on the cytoplasmic side. Over residues 259–271 (SSKISFTSSSPSP) the composition is skewed to low complexity. The disordered stretch occupies residues 259-292 (SSKISFTSSSPSPQRNPKNEAQKNSSSKREETSM). The segment covering 275–291 (PKNEAQKNSSSKREETS) has biased composition (basic and acidic residues). Residues 339-405 (FVKQMRRCEE…EREFLDLNNN (67 aa)) adopt a coiled-coil conformation. The chain crosses the membrane as a helical span at residues 716–736 (AVMFGDAAHGAILLLAALFFI). The Extracellular portion of the chain corresponds to 737-760 (RNERKIESKKIRDEIFNTFYGGRY). A helical membrane pass occupies residues 761 to 781 (IMMLMGIFSIYTGFLYNDAFA). Residues 782 to 855 (KSFNVFGSGW…SFLNSMKMKA (74 aa)) are Cytoplasmic-facing. The chain crosses the membrane as a helical span at residues 856 to 876 (SVIIGITQMTFGVFLSVLNHI). Topologically, residues 877-892 (HFKSYIDIISNFIPQV) are extracellular. The helical transmembrane segment at 893 to 913 (IFLSCIFIYLCIQIIVKWIFF) threads the bilayer. Residues 914-976 (SVNAENVFGF…WYPNQRLVET (63 aa)) lie on the Cytoplasmic side of the membrane. Residues 977–997 (ILISISLACIPIMLFGKPLWV) form a helical membrane-spanning segment. The Extracellular portion of the chain corresponds to 998–1127 (RFVTSKRHKL…NETIAMCLKP (130 aa)). Residues Asn1010, Asn1019, and Asn1118 are each glycosylated (N-linked (GlcNAc...) asparagine). Residues 1128 to 1148 (VVACVAFFIFASLSLSILIMM) form a helical membrane-spanning segment. The Cytoplasmic portion of the chain corresponds to 1149-1210 (EGLSAFLHAL…DISSGQHLHI (62 aa)).

It belongs to the V-ATPase 116 kDa subunit family. As to quaternary structure, V-ATPase is a heteromultimeric enzyme made up of two complexes: the ATP-hydrolytic V1 complex and the proton translocation V0 complex. The V1 complex consists of three catalytic AB heterodimers that form a heterohexamer, three peripheral stalks each consisting of EG heterodimers, one central rotor including subunits D and F, and the regulatory subunits C and H. The proton translocation complex V0 consists of the proton transport subunit a, a ring of proteolipid subunits c9c'', rotary subunit d, subunits e and f, and the accessory subunits vah-19/Ac45 and vah-20/PRR. As to expression, expressed in uterus.

It localises to the membrane. Its function is as follows. Subunit of the V0 complex of vacuolar(H+)-ATPase (V-ATPase), a multisubunit enzyme composed of a peripheral complex (V1) that hydrolyzes ATP and a membrane integral complex (V0) that translocates protons. V-ATPase is responsible for acidifying and maintaining the pH of intracellular compartments and in some cell types, is targeted to the plasma membrane, where it is responsible for acidifying the extracellular environment. This chain is V-type proton ATPase 116 kDa subunit a 4, found in Caenorhabditis elegans.